The sequence spans 205 residues: Large ribosomal subunit protein bL25 (205 aa).

The disordered stretch occupies residues 185-205; it reads PAGAVSEAAEGGEAAGETPAA. Positions 186–205 are enriched in low complexity; it reads AGAVSEAAEGGEAAGETPAA.

It belongs to the bacterial ribosomal protein bL25 family. CTC subfamily. In terms of assembly, part of the 50S ribosomal subunit; part of the 5S rRNA/L5/L18/L25 subcomplex. Contacts the 5S rRNA. Binds to the 5S rRNA independently of L5 and L18.

In terms of biological role, this is one of the proteins that binds to the 5S RNA in the ribosome where it forms part of the central protuberance. The protein is Large ribosomal subunit protein bL25 of Cupriavidus taiwanensis (strain DSM 17343 / BCRC 17206 / CCUG 44338 / CIP 107171 / LMG 19424 / R1) (Ralstonia taiwanensis (strain LMG 19424)).